The sequence spans 496 residues: Probable histidine ammonia-lyase (496 aa).

A cross-link (5-imidazolinone (Ala-Gly)) is located at residues 141–143 (ASG). S142 is modified (2,3-didehydroalanine (Ser)).

Belongs to the PAL/histidase family. Post-translationally, contains an active site 4-methylidene-imidazol-5-one (MIO), which is formed autocatalytically by cyclization and dehydration of residues Ala-Ser-Gly.

The protein resides in the cytoplasm. The enzyme catalyses L-histidine = trans-urocanate + NH4(+). It functions in the pathway amino-acid degradation; L-histidine degradation into L-glutamate; N-formimidoyl-L-glutamate from L-histidine: step 1/3. This is Probable histidine ammonia-lyase from Thermoplasma acidophilum (strain ATCC 25905 / DSM 1728 / JCM 9062 / NBRC 15155 / AMRC-C165).